Here is an 86-residue protein sequence, read N- to C-terminus: Small ribosomal subunit protein bS20 (86 aa).

The segment covering 1 to 11 (MANHKSALKRA) has biased composition (basic residues). Positions 1–27 (MANHKSALKRARQNEERRIRNRARKTR) are disordered.

The protein belongs to the bacterial ribosomal protein bS20 family.

In terms of biological role, binds directly to 16S ribosomal RNA. The polypeptide is Small ribosomal subunit protein bS20 (Syntrophobacter fumaroxidans (strain DSM 10017 / MPOB)).